Reading from the N-terminus, the 345-residue chain is Lysine-specific demethylase JMJ32 (345 aa).

In terms of domain architecture, JmjC spans 122-315; sequence GYLQQQNDCF…IKYAYFNFLQ (194 aa). Residues His174, Asp176, and His281 each coordinate Fe cation.

This sequence belongs to the JARID1 histone demethylase family. Requires Fe(2+) as cofactor. In terms of tissue distribution, expressed ubiquitously including in vasculatures, leaves, siliques, roots and inflorescences. Present in the root meristem. Accumulates in cotyledons and root tips of young seedlings.

Its subcellular location is the nucleus. The protein resides in the cytoplasm. It is found in the endoplasmic reticulum. The catalysed reaction is N(6),N(6),N(6)-trimethyl-L-lysyl(27)-[histone H3] + 2-oxoglutarate + O2 = N(6),N(6)-dimethyl-L-lysyl(27)-[histone H3] + formaldehyde + succinate + CO2. The enzyme catalyses N(6),N(6)-dimethyl-L-lysyl(27)-[histone H3] + 2-oxoglutarate + O2 = N(6)-methyl-L-lysyl(27)-[histone H3] + formaldehyde + succinate + CO2. It catalyses the reaction N(6),N(6),N(6)-trimethyl-L-lysyl(27)-[histone H3] + 2 2-oxoglutarate + 2 O2 = N(6)-methyl-L-lysyl(27)-[histone H3] + 2 formaldehyde + 2 succinate + 2 CO2. Functionally, histone demethylase that demethylates 'Lys-27' (H3K27me) of histone H3 with a specific activity for H3K27me3 and H3K27me2, and involved in the regulation of gene expression. No activity on H3K27me1. Together with JMJ30, regulates the flowering-repressor FLOWERING LOCUS C (FLC) locus by removing the repressive histone modification H3 lysine 27 trimethylation (H3K27me3), especially at elevated temperatures (e.g. 29 degrees Celsius), thus preventing extreme precocious flowering. JMJ30 and JMJ32 are regulators involved in the integration of abscisic acid (ABA) and brassinosteroids (BR) signaling pathways. Together with JMJ30, controls ABA-mediated growth arrest during the post-germination stage in unfavorable conditions, and responses to ABA during root development, via the removal of repressive histone mark (H3K27me3) from the SnRK2.8 promoter, thus promoting SnRK2.8 expression and subsequent kinase-dependent ABI3 activation. In addition, removes the repressive histone marks (H3K27me3) from the BZR1 locus in response to stress and ABA, thus activating the BR signaling pathway which, in turn, inhibits the ABA signaling pathway. This is Lysine-specific demethylase JMJ32 from Arabidopsis thaliana (Mouse-ear cress).